Consider the following 303-residue polypeptide: sn-1-specific diacylglycerol lipase ABHD11 (303 aa).

The transit peptide at 1 to 22 directs the protein to the mitochondrion; that stretch reads MLRWTRAWTAPYRGIGLSNSSF. The region spanning 55–290 is the AB hydrolase-1 domain; that stretch reads PALVFLHGLF…NAGHWVHSDR (236 aa). K75 carries the post-translational modification N6-succinyllysine. Catalysis depends on charge relay system residues S129, D225, and H284.

The protein belongs to the AB hydrolase superfamily. In terms of assembly, interacts with OGDH and DLST; this interaction maintains the functional lipoylation of the 2-oxoglutarate dehydrogenase complex. Post-translationally, phosphorylated.

It is found in the mitochondrion. The protein localises to the mitochondrion matrix. The enzyme catalyses a 1,3-diacyl-sn-glycerol + H2O = a 1-acyl-sn-glycerol + a fatty acid + H(+). The catalysed reaction is 1-octadecanoyl-2-(9Z-octadecenoyl)-sn-glycerol + H2O = 2-(9Z-octadecenoyl)-glycerol + octadecanoate + H(+). It carries out the reaction 1-octadecanoyl-2-(4Z,7Z,10Z,13Z,16Z,19Z-docosahexaenoyl)-sn-glycerol + H2O = 2-(4Z,7Z,10Z,13Z,16Z,19Z-docosahexaenoyl)-glycerol + octadecanoate + H(+). It catalyses the reaction a 1,2-diacyl-sn-glycerol + H2O = a 2-acylglycerol + a fatty acid + H(+). The enzyme catalyses 1,2-didecanoylglycerol + H2O = decanoylglycerol + decanoate + H(+). The catalysed reaction is 1-octadecanoyl-2-(5Z,8Z,11Z,14Z-eicosatetraenoyl)-sn-glycerol + H2O = 2-(5Z,8Z,11Z,14Z-eicosatetraenoyl)-glycerol + octadecanoate + H(+). Its activity is regulated as follows. The diacylglycerol lipase activity can be modulated by phosphorylation by cAMP-dependent protein kinase. Its function is as follows. Catalyzes the hydrolysis of diacylglycerol in vitro and may function as a key regulator in lipid metabolism, namely by regulating the intracellular levels of diacylglycerol. 1,2-diacyl-sn-glycerols are the preferred substrate over 1,3-diacyl-sn-glycerols. The enzyme hydrolyzes stearate in preference to palmitate from the sn-1 position of 1,2-diacyl-sn-glycerols. Maintains the functional lipoylation of the 2-oxoglutarate dehydrogenase complex (OGDHc) through its interaction with the OGDHc by preventing the formation of lipoyl adducts. In addition, is also required for the expansion and differentiation of embryonic stem cells (ESCs). The protein is sn-1-specific diacylglycerol lipase ABHD11 of Bos taurus (Bovine).